The primary structure comprises 361 residues: Molybdopterin synthase catalytic subunit (361 aa).

Substrate contacts are provided by residues 101-102 (HR), K117, and 124-126 (KKE).

Belongs to the MoaE family. MOCS2B subfamily. Heterotetramer; composed of 2 small (Mocs2A) and 2 large (Mocs2B) subunits.

It is found in the cytoplasm. The enzyme catalyses 2 [molybdopterin-synthase sulfur-carrier protein]-C-terminal-Gly-aminoethanethioate + cyclic pyranopterin phosphate + H2O = molybdopterin + 2 [molybdopterin-synthase sulfur-carrier protein]-C-terminal Gly-Gly + 2 H(+). It functions in the pathway cofactor biosynthesis; molybdopterin biosynthesis. Its function is as follows. Catalytic subunit of the molybdopterin synthase complex, a complex that catalyzes the conversion of precursor Z into molybdopterin. Acts by mediating the incorporation of 2 sulfur atoms from thiocarboxylated Mocs2A into precursor Z to generate a dithiolene group. This is Molybdopterin synthase catalytic subunit from Drosophila pseudoobscura pseudoobscura (Fruit fly).